Here is a 227-residue protein sequence, read N- to C-terminus: Ribonuclease 3 (227 aa).

The region spanning 4-126 (LDRLERKIGY…IIGAMSLDQG (123 aa)) is the RNase III domain. A Mg(2+)-binding site is contributed by Glu39. Asp43 is a catalytic residue. Residues Asp112 and Glu115 each contribute to the Mg(2+) site. Glu115 is an active-site residue. Residues 153–226 (DAKTRLQEYL…AEQILKELDI (74 aa)) form the DRBM domain.

It belongs to the ribonuclease III family. In terms of assembly, homodimer. Requires Mg(2+) as cofactor.

It is found in the cytoplasm. The enzyme catalyses Endonucleolytic cleavage to 5'-phosphomonoester.. Digests double-stranded RNA. Involved in the processing of primary rRNA transcript to yield the immediate precursors to the large and small rRNAs (23S and 16S). Processes some mRNAs, and tRNAs when they are encoded in the rRNA operon. Processes pre-crRNA and tracrRNA of type II CRISPR loci if present in the organism. In Haemophilus influenzae (strain ATCC 51907 / DSM 11121 / KW20 / Rd), this protein is Ribonuclease 3.